The sequence spans 382 residues: Draxin-A (382 aa).

The signal sequence occupies residues 1-22 (MMSSSWCLPLALLFSTLAVSHS). Disordered stretches follow at residues 28 to 213 (THAK…PPSP), 233 to 252 (LPTL…GKMQ), and 275 to 297 (VDAW…SGNV). Over residues 73-82 (RGAKASSGAG) the composition is skewed to low complexity. Over residues 139-149 (GPRKGRGQGHG) the composition is skewed to basic residues. Positions 190–201 (SVSSAAAATSPS) are enriched in low complexity. The segment covering 281-290 (SRKKDKRRSK) has biased composition (basic residues). N-linked (GlcNAc...) asparagine glycans are attached at residues Asn291 and Asn296.

This sequence belongs to the draxin family.

Its subcellular location is the secreted. Functionally, chemorepulsive axon guidance protein required for the development of spinal cord and forebrain commissures. Acts as a chemorepulsive guidance protein for commissural axons during development. Able to inhibit or repel neurite outgrowth from dorsal spinal cord. This chain is Draxin-A (draxin-A), found in Salmo salar (Atlantic salmon).